Reading from the N-terminus, the 308-residue chain is Methionyl-tRNA formyltransferase (308 aa).

Position 109–112 (109–112) interacts with (6S)-5,6,7,8-tetrahydrofolate; sequence SLLP.

The protein belongs to the Fmt family.

The enzyme catalyses L-methionyl-tRNA(fMet) + (6R)-10-formyltetrahydrofolate = N-formyl-L-methionyl-tRNA(fMet) + (6S)-5,6,7,8-tetrahydrofolate + H(+). Functionally, attaches a formyl group to the free amino group of methionyl-tRNA(fMet). The formyl group appears to play a dual role in the initiator identity of N-formylmethionyl-tRNA by promoting its recognition by IF2 and preventing the misappropriation of this tRNA by the elongation apparatus. This chain is Methionyl-tRNA formyltransferase, found in Salinispora arenicola (strain CNS-205).